Reading from the N-terminus, the 761-residue chain is DNA topoisomerase 1 (761 aa).

Residues 6–143 form the Toprim domain; it reads TALIICEKPS…KRMRFSSLTK (138 aa). Mg(2+)-binding residues include Glu12 and Asp111. The region spanning 157–569 is the Topo IA-type catalytic domain; sequence DYGLVDAGES…EAEKRLRKIL (413 aa). An interaction with DNA region spans residues 196–201; the sequence is SVGRVQ. Tyr315 functions as the O-(5'-phospho-DNA)-tyrosine intermediate in the catalytic mechanism. 3 consecutive C4-type zinc fingers follow at residues 600–626, 680–706, and 721–747; these read CPKC…YPEC and CPKC…YPKC.

This sequence belongs to the type IA topoisomerase family. As to quaternary structure, monomer. It depends on Mg(2+) as a cofactor.

It carries out the reaction ATP-independent breakage of single-stranded DNA, followed by passage and rejoining.. Its function is as follows. Releases the supercoiling and torsional tension of DNA, which is introduced during the DNA replication and transcription, by transiently cleaving and rejoining one strand of the DNA duplex. Introduces a single-strand break via transesterification at a target site in duplex DNA. The scissile phosphodiester is attacked by the catalytic tyrosine of the enzyme, resulting in the formation of a DNA-(5'-phosphotyrosyl)-enzyme intermediate and the expulsion of a 3'-OH DNA strand. The free DNA strand then undergoes passage around the unbroken strand, thus removing DNA supercoils. Finally, in the religation step, the DNA 3'-OH attacks the covalent intermediate to expel the active-site tyrosine and restore the DNA phosphodiester backbone. The polypeptide is DNA topoisomerase 1 (Methanocaldococcus jannaschii (strain ATCC 43067 / DSM 2661 / JAL-1 / JCM 10045 / NBRC 100440) (Methanococcus jannaschii)).